The sequence spans 161 residues: Dihydrofolate reductase (161 aa).

A DHFR domain is found at 1-160 (MTMVGLIWAQ…LRYRLYSYHR (160 aa)). Substrate is bound at residue 7 to 9 (IWA). NADP(+)-binding positions include 8 to 9 (WA) and 16 to 21 (IGRGGD). Substrate contacts are provided by Asp-29 and Arg-34. An NADP(+)-binding site is contributed by 45–48 (GRRT). A substrate-binding site is contributed by Arg-62. NADP(+) is bound by residues 67 to 70 (LSRQ), Gly-82, and 96 to 101 (IGGGQV). Substrate contacts are provided by Tyr-102 and Thr-115.

Belongs to the dihydrofolate reductase family.

It carries out the reaction (6S)-5,6,7,8-tetrahydrofolate + NADP(+) = 7,8-dihydrofolate + NADPH + H(+). It functions in the pathway cofactor biosynthesis; tetrahydrofolate biosynthesis; 5,6,7,8-tetrahydrofolate from 7,8-dihydrofolate: step 1/1. Functionally, key enzyme in folate metabolism. Catalyzes an essential reaction for de novo glycine and purine synthesis, and for DNA precursor synthesis. In Mycobacterium tuberculosis (strain CDC 1551 / Oshkosh), this protein is Dihydrofolate reductase (folA).